The sequence spans 229 residues: Probable septum site-determining protein MinC (229 aa).

It belongs to the MinC family. Interacts with MinD and FtsZ.

Cell division inhibitor that blocks the formation of polar Z ring septums. Rapidly oscillates between the poles of the cell to destabilize FtsZ filaments that have formed before they mature into polar Z rings. Prevents FtsZ polymerization. This chain is Probable septum site-determining protein MinC, found in Ruminiclostridium cellulolyticum (strain ATCC 35319 / DSM 5812 / JCM 6584 / H10) (Clostridium cellulolyticum).